The chain runs to 500 residues: NAD(P)H-quinone oxidoreductase chain 4, chloroplastic (500 aa).

The next 14 membrane-spanning stretches (helical) occupy residues 3–23, 37–57, 84–104, 111–129, 134–154, 167–187, 208–228, 242–262, 272–292, 305–325, 330–350, 386–406, 416–436, and 462–482; these read FFPW…VIFF, ICIC…HFQF, GLSI…TLAA, SRLF…IGSF, LLLF…LLSI, FILY…GVGL, ALEI…SPII, HYST…YGLI, AHSI…IYAA, IAYS…SITD, GAIL…FLAG, LALP…GIIT, ILIT…SLSM, and LFVS…PDFV.

This sequence belongs to the complex I subunit 4 family.

The protein localises to the plastid. It localises to the chloroplast thylakoid membrane. It catalyses the reaction a plastoquinone + NADH + (n+1) H(+)(in) = a plastoquinol + NAD(+) + n H(+)(out). The enzyme catalyses a plastoquinone + NADPH + (n+1) H(+)(in) = a plastoquinol + NADP(+) + n H(+)(out). The polypeptide is NAD(P)H-quinone oxidoreductase chain 4, chloroplastic (Panax ginseng (Korean ginseng)).